The sequence spans 278 residues: Cytoplasmic envelopment protein 1 (278 aa).

The protein belongs to the herpesviridae cytoplasmic envelopment protein 1 family. Interacts with BSRF1 tegument protein; the BBRF2-BSRF1 complexes oligomerize and might play a role in tethering the viral nucleocapsids to the host Golgi membrane during secondary envelopment.

The protein resides in the virion. It is found in the virion tegument. The protein localises to the host cytoplasm. It localises to the host Golgi apparatus. Functionally, plays a critical role in cytoplasmic virus egress. Participates in the final step of tegumentation and envelope acquisition within the host cytoplasm. This is Cytoplasmic envelopment protein 1 from Homo sapiens (Human).